A 450-amino-acid polypeptide reads, in one-letter code: Keratin, type I cytoskeletal 25 (450 aa).

The segment at 1-25 is disordered; sequence MSLRLPSGSRRASPRPTTGSLRLSS. The segment at 1-78 is head; sequence MSLRLPSGSR…VNEGGLLSGN (78 aa). The segment at 79–114 is coil 1A; it reads EKVTMQNLNDRLASYLENVRALEEANADLEQKIKGW. One can recognise an IF rod domain in the interval 79-394; the sequence is EKVTMQNLND…LLIGGDDGAC (316 aa). The tract at residues 115 to 136 is linker 1; that stretch reads YEKFGPGSCRGLDHDYSRYFPI. The segment at 137–228 is coil 1B; it reads IEDLKNQIIA…KNHKEEMQVL (92 aa). Residues 229 to 251 are linker 12; that stretch reads QCAAGGNVNVEMNAAPGVDLTVL. Residues 252 to 390 form a coil 2 region; the sequence is LNNMRAEYEA…ETYCLLIGGD (139 aa). The tract at residues 391–450 is tail; the sequence is DGACKSGGYKSKDYGAGNVGNQMKDPVKAIVVKKVLEEVDQRSKILTPRLHSLEEKSQSN. At Ser-442 the chain carries Phosphoserine.

It belongs to the intermediate filament family. As to quaternary structure, heterodimer of a type I and a type II keratin. Heterodimer with type II keratin KRT5 leading to the formation of keratin intermediate filament (KIF) network. Interacts with KRT6A to form filaments.

The protein resides in the cytoplasm. In terms of biological role, essential for the proper assembly of type I and type II keratin protein complexes and formation of keratin intermediate filaments in the inner root sheath (irs). Plays a role in the cytoskeleton organization. In Bos taurus (Bovine), this protein is Keratin, type I cytoskeletal 25.